The sequence spans 418 residues: Putative ion-transport protein YfeO (418 aa).

A run of 12 helical transmembrane segments spans residues Leu10–Val30, Asp54–Ile74, Ala99–Pro119, Glu120–Pro140, Ile149–Ile169, Leu186–Pro206, Ile223–Cys243, Val258–Val278, Asp300–Phe320, Gly322–His342, Val343–Val363, and Leu371–Met391.

This sequence belongs to the chloride channel (TC 2.A.49) family.

It localises to the cell membrane. The chain is Putative ion-transport protein YfeO from Escherichia coli O9:H4 (strain HS).